The sequence spans 339 residues: Glycerol-3-phosphate dehydrogenase [NAD(P)+] (339 aa).

Serine 13, tryptophan 14, and lysine 108 together coordinate NADPH. Lysine 108, glycine 139, and serine 141 together coordinate sn-glycerol 3-phosphate. Alanine 143 contacts NADPH. Sn-glycerol 3-phosphate contacts are provided by lysine 194, aspartate 247, serine 257, arginine 258, and asparagine 259. Catalysis depends on lysine 194, which acts as the Proton acceptor. Residue arginine 258 coordinates NADPH. Valine 282 and glutamate 284 together coordinate NADPH.

This sequence belongs to the NAD-dependent glycerol-3-phosphate dehydrogenase family.

Its subcellular location is the cytoplasm. The enzyme catalyses sn-glycerol 3-phosphate + NAD(+) = dihydroxyacetone phosphate + NADH + H(+). The catalysed reaction is sn-glycerol 3-phosphate + NADP(+) = dihydroxyacetone phosphate + NADPH + H(+). The protein operates within membrane lipid metabolism; glycerophospholipid metabolism. Catalyzes the reduction of the glycolytic intermediate dihydroxyacetone phosphate (DHAP) to sn-glycerol 3-phosphate (G3P), the key precursor for phospholipid synthesis. In Streptococcus mutans serotype c (strain ATCC 700610 / UA159), this protein is Glycerol-3-phosphate dehydrogenase [NAD(P)+].